A 339-amino-acid polypeptide reads, in one-letter code: Ribosomal RNA small subunit methyltransferase H (339 aa).

S-adenosyl-L-methionine is bound by residues 56 to 58, aspartate 76, phenylalanine 102, aspartate 123, and glutamine 130; that span reads GGH. Disordered regions lie at residues 274 to 309 and 320 to 339; these read RHSR…KAEV and LRVA…PQHS. The segment covering 325 to 339 has biased composition (polar residues); sequence RTDTPYNTDPSPQHS.

Belongs to the methyltransferase superfamily. RsmH family.

The protein resides in the cytoplasm. It catalyses the reaction cytidine(1402) in 16S rRNA + S-adenosyl-L-methionine = N(4)-methylcytidine(1402) in 16S rRNA + S-adenosyl-L-homocysteine + H(+). Functionally, specifically methylates the N4 position of cytidine in position 1402 (C1402) of 16S rRNA. The protein is Ribosomal RNA small subunit methyltransferase H of Psychrobacter sp. (strain PRwf-1).